The primary structure comprises 80 residues: Cytochrome c oxidase subunit 7A1, mitochondrial (80 aa).

The N-terminal 21 residues, 1 to 21 (MRALRVSQALVRSFSSSTRSH), are a transit peptide targeting the mitochondrion. Residues 22–46 (LENRVAEKQKLFQADNDLPVHLKGG) lie on the Mitochondrial matrix side of the membrane. Residues 47–75 (GMDNVLYRLTMTLTLGGTAYCLYCLGWAS) traverse the membrane as a helical segment. At 76-80 (FPHKK) the chain is on the mitochondrial intermembrane side.

The protein belongs to the cytochrome c oxidase VIIa family. Component of the complex IV (CIV, cytochrome c oxidase), a multisubunit enzyme composed of 14 subunits. The complex is composed of a catalytic core of 3 subunits MT-CO1, MT-CO2 and MT-CO3, encoded in the mitochondrial DNA, and 11 supernumerary subunits COX4I, COX5A, COX5B, COX6A, COX6B, COX6C, COX7A, COX7B, COX7C, COX8 and NDUFA4, which are encoded in the nuclear genome. The complex exists as a monomer or a dimer and forms supercomplexes (SCs) in the inner mitochondrial membrane with NADH-ubiquinone oxidoreductase (complex I, CI) and ubiquinol-cytochrome c oxidoreductase (cytochrome b-c1 complex, complex III, CIII), resulting in different assemblies (supercomplex SCI(1)III(2)IV(1) and megacomplex MCI(2)III(2)IV(2)).

Its subcellular location is the mitochondrion inner membrane. Its pathway is energy metabolism; oxidative phosphorylation. In terms of biological role, component of the mitochondrial respiratory complex IV (CIV, also named cytochrome c oxidase complex), the last enzyme in the mitochondrial electron transport chain which drives oxidative phosphorylation. The CIV complex is the component of the respiratory chain that catalyzes the reduction of oxygen to water. Acts as an assembly factor that specifically drives the homodimerization of CIV complexes, mediating the formation of mitochondrial respiratory supercomplexes (respirasomes) containing two CIV: supercomplxes with two molecules of CIV show improved activity. Despite being highly expressed in brown adipose tissue, not required for thermogenesis. This chain is Cytochrome c oxidase subunit 7A1, mitochondrial, found in Mus musculus (Mouse).